Reading from the N-terminus, the 191-residue chain is Protein YceI (191 aa).

The signal sequence occupies residues Met-1 to Ala-22.

It belongs to the UPF0312 family. Type 1 subfamily.

It localises to the periplasm. This Shigella flexneri protein is Protein YceI.